The chain runs to 477 residues: Histidine--tRNA ligase (477 aa).

The protein belongs to the class-II aminoacyl-tRNA synthetase family. Homodimer.

The protein resides in the cytoplasm. The enzyme catalyses tRNA(His) + L-histidine + ATP = L-histidyl-tRNA(His) + AMP + diphosphate + H(+). In Xanthomonas campestris pv. campestris (strain 8004), this protein is Histidine--tRNA ligase.